The chain runs to 846 residues: MSHSQCTQISDNYPPSLGISDDTSVSLCPSDGLQPFTPDLTYTHQFNFTQPAPLLPPPETLERVGPRNKKIYVLWTEMVNDDFVTWWLSTEYGSQMKRNIFEGKHQSECWQHFHQVAAIQDGSPKVMYKVCNHILSHPADRHRGTSSMNKHYSSGVNCRKSVPVSKDIKRLIQDGMHSAPQKTHYTAKAWMERLVTFITTSRLPFQLVEYPQFRALIEMAQRAPLLPILPCAKTIRNHLQELVQERQKSLLQKLSQGAKLSIALDCWTSPFRQSFMAVTGYFLDVDWNYREILLGFEPLSGSHTGAYLSTVLQQVLEEHQIEARILTVTTDNAANNSTLMNSLSESLQSIELPNQIPVIHIPCMAHIIQLSLNELLGRMEVNPRNDREEIEWTERDKSAQPENQDIIHTLEKIRRLAVFINRSPQRRENFLYLQSKEPKLVPIQDVRTRWNSTFLMLYRARKLQSTFDEYCSEYGQPDLKLTKEEWRQVDYLLSITKPFFTFTTSLSQTKEVTIHSVFAIYNYLFTHLEKSKEKLSEYYAMTDHVGGDLYAIGTILAPQNKLEFFSTSEWEPEWRVRYRKSLEEYIVPYEKRYSETQTQSIPIRQILTGGISDIDMLVTAATSLQPRTTAHDEISRYLGSSTQLMNPRIFWKDHQFKYPILASLAQYILTTPASGSGVERLFNSARDICHYRRGSLKPHTIKELMLFMCTTKFDLESEELSLMDEYLTTQEIQRAREERDAQQALEAQNTKYDFDPISDSEEAESEDESLVLPQSPQASQARSQRSLGKRPAREEEPLIELDGNEEDEVPLPYNRHLVTVSSTQRRSSGRQPKRSKRDEDFVYETP.

Residues 104-166 (KHQSECWQHF…NCRKSVPVSK (63 aa)) form a BED-type; degenerate zinc finger. Positions 734-846 (RAREERDAQQ…RDEDFVYETP (113 aa)) are disordered. The segment covering 756–769 (PISDSEEAESEDES) has biased composition (acidic residues). Over residues 773 to 786 (PQSPQASQARSQRS) the composition is skewed to low complexity. Acidic residues predominate over residues 797–809 (PLIELDGNEEDEV).

It localises to the nucleus. Putative transcriptional regulator; part of the gene cluster that mediates the biosynthesis of polyesters containing 2,4-dihydroxy-6-(2-hydroxypropyl)benzoate and 3-hydroxybutyrate moieties, such as talapolyester G, 15G256beta and 15G256beta-2; as well as to oxidized derivatives such as 15G256alpha. This chain is Putative transcriptional regulator tpeD, found in Talaromyces stipitatus (strain ATCC 10500 / CBS 375.48 / QM 6759 / NRRL 1006) (Penicillium stipitatum).